A 121-amino-acid chain; its full sequence is Large ribosomal subunit protein bL12 (121 aa).

It belongs to the bacterial ribosomal protein bL12 family. In terms of assembly, homodimer. Part of the ribosomal stalk of the 50S ribosomal subunit. Forms a multimeric L10(L12)X complex, where L10 forms an elongated spine to which 2 to 4 L12 dimers bind in a sequential fashion. Binds GTP-bound translation factors.

Forms part of the ribosomal stalk which helps the ribosome interact with GTP-bound translation factors. Is thus essential for accurate translation. In Tremblaya princeps, this protein is Large ribosomal subunit protein bL12.